We begin with the raw amino-acid sequence, 486 residues long: Arginine/agmatine antiporter (486 aa).

12 consecutive transmembrane segments (helical) span residues 12–32, 41–61, 85–105, 129–149, 161–181, 211–231, 242–262, 296–316, 341–361, 367–387, 418–438, and 461–481; these read LGAI…GIFS, AGAG…FFIA, GFGP…QIFG, NTIP…FIVL, IGTI…AFFF, STML…VMSA, ATIL…LLPF, IGLL…VAEI, VSLY…YFST, MLSI…AFLV, IWLI…LLAL, and EVTK…LFST.

Belongs to the amino acid-polyamine-organocation (APC) superfamily. Basic amino acid/polyamine antiporter (APA) (TC 2.A.3.2) family.

The protein localises to the cell inner membrane. Catalyzes the exchange of L-arginine for agmatine. The arginine uptake by the bacterium in the macrophage may be a virulence factor against the host innate immune response. The sequence is that of Arginine/agmatine antiporter (aaxC) from Chlamydia felis (strain Fe/C-56) (Chlamydophila felis).